Here is a 532-residue protein sequence, read N- to C-terminus: Putative sodium-dependent excitatory amino acid transporter glt-3 (532 aa).

The Cytoplasmic segment spans residues 1 to 5 (MGMKK). 3 helical membrane-spanning segments follow: residues 6–26 (DLLL…GFVI), 46–66 (FMQI…ISAL), and 83–103 (IYYM…VSSI). The Extracellular portion of the chain corresponds to 104-181 (HPGDPELIHE…SEVLHKQTLT (78 aa)). N-linked (GlcNAc...) asparagine glycans are attached at residues Asn164 and Asn169. The next 5 helical transmembrane spans lie at 182-202 (YTNE…GIIL), 222-242 (IIMR…LSLV), 264-284 (VTVI…LYFL), 352-372 (AVAV…MDLV), and 383-402 (IGSG…LTTV).

The protein belongs to the dicarboxylate/amino acid:cation symporter (DAACS) (TC 2.A.23) family.

The protein localises to the membrane. The polypeptide is Putative sodium-dependent excitatory amino acid transporter glt-3 (glt-3) (Caenorhabditis elegans).